The following is a 1066-amino-acid chain: MTSYRERSADLARFYTVTEPQRHPRGYTVYKVTARVVSRRNPEDVQEIIVWKRYSDFKKLHKELWQIHKNLFRHSELFPPFAKGIVFGRFDETVIEERRQCAEDLLQFSANIPALYNSKQLEDFFKGGIINDSSELIGPAEAHSDSLIDTFPECSTEGFSSDSDLVSLTVDVDSLAELDDGMASNQNSPIRTFGLNLSSDSSALGAVASDSEQSKTEEERESRSLFPGSLKPKLGKRDYLEKAGELIKLALKKEEEDDYEAASDFYRKGVDLLLEGVQGESSPTRREAVKRRTAEYLMRAESISSLYGKPQLDDVSQPPGSLSSRPLWNLRSPAEELKAFRVLGVIDKVLLVMDTRTEQTFILKGLRKSSEYSRNRKTIIPRCVPNMVCLHKYIISEESVFLVLQHAEGGKLWSYISKFLNRSPEESFDIKEVKKPTLAKVHLQQPTSSPQDSSSFESRGSDGGSMLKALPLKSSLTPSSQDDSNQEDDGQDSSPKWPDSGSSSEEECTTSYLTLCNEYGQEKIEPGSLNEEPFMKTEGNGVDTKAIKSFPAHLAADSDSPSTQLRAHELKFFPNDDPEAVSSPRTSDSLSRSKNSPMEFFRIDSKDSASELLGLDFGEKLYSLKSEPLKPFFTLPDGDSASRSFNTSESKVEFKAQDTISRGSDDSVPVISFKDAAFDDVSGTDEGRPDLLVNLPGELESTREAAAMGPTKFTQTNIGIIENKLLEAPDVLCLRLSTEQCQAHEEKGIEELSDPSGPKSYSITEKHYAQEDPRMLFVAAVDHSSSGDMSLLPSSDPKFQGLGVVESAVTANNTEESLFRICSPLSGANEYIASTDTLKTEEVLLFTDQTDDLAKEEPTSLFQRDSETKGESGLVLEGDKEIHQIFEDLDKKLALASRFYIPEGCIQRWAAEMVVALDALHREGIVCRDLNPNNILLNDRGHIQLTYFSRWSEVEDSCDSDAIERMYCAPEVGAITEETEACDWWSLGAVLFELLTGKTLVECHPAGINTHTTLNMPECVSEEARSLIQQLLQFNPLERLGAGVAGVEDIKSHPFFTPVDWAELMR.

Residues 8–132 (SADLARFYTV…DFFKGGIIND (125 aa)) form the PX domain. The tract at residues 207–228 (VASDSEQSKTEEERESRSLFPG) is disordered. The segment covering 212-223 (EQSKTEEERESR) has biased composition (basic and acidic residues). The 29-residue stretch at 277–305 (VQGESSPTRREAVKRRTAEYLMRAESISS) folds into the MIT domain. Phosphoserine occurs at positions 282, 423, 427, 449, and 455. The Protein kinase 1 domain occupies 344–445 (GVIDKVLLVM…PTLAKVHLQQ (102 aa)). The segment at 441–509 (VHLQQPTSSP…SGSSSEEECT (69 aa)) is disordered. Low complexity predominate over residues 448 to 458 (SSPQDSSSFES). The segment covering 474 to 483 (SSLTPSSQDD) has biased composition (polar residues). Low complexity predominate over residues 492–503 (DSSPKWPDSGSS). Ser494, Ser528, Ser583, Ser605, Ser608, Ser640, Ser661, Ser664, Ser667, and Ser794 each carry phosphoserine. Residues 553-596 (HLAADSDSPSTQLRAHELKFFPNDDPEAVSSPRTSDSLSRSKNS) are disordered. The segment covering 582–593 (SSPRTSDSLSRS) has biased composition (low complexity). Residues 794–1056 (SSDPKFQGLG…VEDIKSHPFF (263 aa)) form the Protein kinase 2 domain. ATP is bound by residues 801–809 (GLGVVESAV) and Arg820. The residue at position 872 (Ser872) is a Phosphoserine. The Proton acceptor role is filled by Asp929.

It belongs to the protein kinase superfamily. Ser/Thr protein kinase family. S6 kinase subfamily. Interacts with SPHK1 and phosphatidylinositol 3-phosphate. Interacts (via PX domain) with PRDX3. In terms of tissue distribution, highly expressed in testis, skeletal muscle, brain, heart, placenta, kidney and liver and weakly expressed in thymus, small intestine, lung and colon.

It is found in the cytoplasm. The protein localises to the membrane. It localises to the early endosome. It catalyses the reaction L-seryl-[protein] + ATP = O-phospho-L-seryl-[protein] + ADP + H(+). The catalysed reaction is L-threonyl-[protein] + ATP = O-phospho-L-threonyl-[protein] + ADP + H(+). May be involved in transmitting sphingosine-1 phosphate (SPP)-mediated signaling into the cell. Plays a role in the recruitment of PRDX3 to early endosomes. The polypeptide is Ribosomal protein S6 kinase delta-1 (RPS6KC1) (Homo sapiens (Human)).